A 307-amino-acid polypeptide reads, in one-letter code: Ribosomal protein L11 methyltransferase (307 aa).

S-adenosyl-L-methionine is bound by residues threonine 156, glycine 177, aspartate 199, and asparagine 243.

Belongs to the methyltransferase superfamily. PrmA family.

It is found in the cytoplasm. The catalysed reaction is L-lysyl-[protein] + 3 S-adenosyl-L-methionine = N(6),N(6),N(6)-trimethyl-L-lysyl-[protein] + 3 S-adenosyl-L-homocysteine + 3 H(+). Functionally, methylates ribosomal protein L11. The chain is Ribosomal protein L11 methyltransferase from Syntrophomonas wolfei subsp. wolfei (strain DSM 2245B / Goettingen).